Reading from the N-terminus, the 249-residue chain is Pleckstrin homology domain-containing family F member 2 (249 aa).

Position 16 is a phosphoserine (serine 16). Residues 35–131 (VLIGEGVLTK…WMNHINKCVT (97 aa)) enclose the PH domain. Lysine 44 carries the N6-acetyllysine modification. Residues 152-212 (DSEATVCMRC…ICDFCYDLLS (61 aa)) form an FYVE-type zinc finger. Zn(2+) contacts are provided by cysteine 158, cysteine 161, cysteine 175, cysteine 178, cysteine 183, cysteine 186, cysteine 204, and cysteine 207. Residues 221 to 233 (PTRSDSYSQSLKS) show a composition bias toward polar residues. A disordered region spans residues 221-249 (PTRSDSYSQSLKSPLNDASDDDDDDDSSD). Over residues 238–249 (ASDDDDDDDSSD) the composition is skewed to acidic residues. A phosphoserine mark is found at serine 239 and serine 248.

In terms of assembly, may interact with EEA1. As to expression, expressed in brain, stomach and thymus, as well as in kidney, spleen, and skeletal muscle. Also expressed in peripheral blood mononuclear cells and dendritic cells.

It is found in the early endosome membrane. It localises to the endoplasmic reticulum. In terms of biological role, may play a role in early endosome fusion upstream of RAB5, hence regulating receptor trafficking and fluid-phase transport. Enhances cellular sensitivity to TNF-induced apoptosis. This Mus musculus (Mouse) protein is Pleckstrin homology domain-containing family F member 2 (Plekhf2).